The following is a 261-amino-acid chain: Indole-3-glycerol phosphate synthase (261 aa).

This sequence belongs to the TrpC family.

It catalyses the reaction 1-(2-carboxyphenylamino)-1-deoxy-D-ribulose 5-phosphate + H(+) = (1S,2R)-1-C-(indol-3-yl)glycerol 3-phosphate + CO2 + H2O. It participates in amino-acid biosynthesis; L-tryptophan biosynthesis; L-tryptophan from chorismate: step 4/5. The protein is Indole-3-glycerol phosphate synthase of Burkholderia pseudomallei (strain 1710b).